A 284-amino-acid polypeptide reads, in one-letter code: Ubiquinone biosynthesis protein COQ4, mitochondrial (284 aa).

Residues His165, Asp166, His169, and Glu181 each coordinate Zn(2+).

Belongs to the COQ4 family. As to quaternary structure, component of a multi-subunit COQ enzyme complex, composed of at least COQ3, COQ4, COQ5, COQ6, COQ7 and COQ9. The cofactor is Zn(2+).

The protein resides in the mitochondrion inner membrane. It carries out the reaction a 4-hydroxy-3-methoxy-5-(all-trans-polyprenyl)benzoate + H(+) = a 2-methoxy-6-(all-trans-polyprenyl)phenol + CO2. The protein operates within cofactor biosynthesis; ubiquinone biosynthesis. Lyase that catalyzes the C1-decarboxylation of 4-hydroxy-3-methoxy-5-(all-trans-polyprenyl)benzoic acid into 2-methoxy-6-(all-trans-polyprenyl)phenol during ubiquinone biosynthesis. This is Ubiquinone biosynthesis protein COQ4, mitochondrial from Ajellomyces dermatitidis (strain ER-3 / ATCC MYA-2586) (Blastomyces dermatitidis).